A 20-amino-acid chain; its full sequence is Hemoglobinase-like protein 1 (20 aa).

It belongs to the peptidase C13 family.

It carries out the reaction Hydrolysis of proteins and small molecule substrates at -Asn-|-Xaa- bonds.. The chain is Hemoglobinase-like protein 1 from Fasciola hepatica (Liver fluke).